Consider the following 391-residue polypeptide: Saxitoxin and tetrodotoxin-binding protein 2 (391 aa).

A signal peptide spans 1–20; that stretch reads MGAVPGVVLLLMLAVLGIRA. A run of 2 repeats spans residues 24 to 202 and 203 to 391. Residues Asn41, Asn54, Asn63, Asn97, Asn234, Asn268, Asn277, and Asn307 are each glycosylated (N-linked (GlcNAc...) asparagine).

In terms of assembly, homodimer or heterodimer of PSTBP1 and PSTBP2. Glycosylated.

It localises to the secreted. In terms of biological role, binds both saxitoxin and tetradotoxin. May play a role in toxin accumulation and/or excretion. In Takifugu pardalis (Panther puffer), this protein is Saxitoxin and tetrodotoxin-binding protein 2 (psbp2).